The sequence spans 424 residues: MLFERARGVFPGGVNSPARALKHLAAPLVANGASGPYLYTDRGRLVDYCMAFGAIILGHAHPRVKNAVAKQLERGWIYALLTEEEVAYAERIKAHVPSIEKMRIVNSGTEATMNAVRLARGYTRRDVIIKFDGNFHGSHDYVLVKAGSGAATWGVPTSAGVPQDVIKLTAVVPYNDVDAFVKAVREVGGRLAAVIVEPIAANYGLIIPDREFIKALREETERAGALLIFDEVVTGFRVGLSGAQGHFGVRPDLTTLGKVVGGGFPIGIFGGRADVMDMVAPSGPVYNAGTYNAHPVSVAAGLAVVEELERGEPYKIANEAAERLARGIEDIAGRVGFDVVVKQIASMFQLYFRRGDVKTPQDVRESDERLYLKLHELAIKHGVYLAPSQYETNFTSAAHTRDVVETTLAALEKAFTELKSQVGK.

Position 258 is an N6-(pyridoxal phosphate)lysine (lysine 258).

It belongs to the class-III pyridoxal-phosphate-dependent aminotransferase family. HemL subfamily. Pyridoxal 5'-phosphate serves as cofactor.

It localises to the cytoplasm. It catalyses the reaction (S)-4-amino-5-oxopentanoate = 5-aminolevulinate. The protein operates within porphyrin-containing compound metabolism; protoporphyrin-IX biosynthesis; 5-aminolevulinate from L-glutamyl-tRNA(Glu): step 2/2. This is Glutamate-1-semialdehyde 2,1-aminomutase from Pyrobaculum neutrophilum (strain DSM 2338 / JCM 9278 / NBRC 100436 / V24Sta) (Thermoproteus neutrophilus).